The chain runs to 449 residues: 3-phosphoshikimate 1-carboxyvinyltransferase (449 aa).

Residues 1–23 (MSHSASPKPATARRSEALTGEIR) form a disordered region. 3-phosphoshikimate contacts are provided by Lys-28, Ser-29, and Arg-33. Lys-28 contributes to the phosphoenolpyruvate binding site. 2 residues coordinate phosphoenolpyruvate: Gly-100 and Arg-128. 3-phosphoshikimate contacts are provided by Ser-173, Gln-175, Asp-326, and Lys-353. Gln-175 lines the phosphoenolpyruvate pocket. Asp-326 acts as the Proton acceptor in catalysis. Phosphoenolpyruvate contacts are provided by Arg-357 and Arg-402.

The protein belongs to the EPSP synthase family. Monomer.

It is found in the cytoplasm. It catalyses the reaction 3-phosphoshikimate + phosphoenolpyruvate = 5-O-(1-carboxyvinyl)-3-phosphoshikimate + phosphate. It functions in the pathway metabolic intermediate biosynthesis; chorismate biosynthesis; chorismate from D-erythrose 4-phosphate and phosphoenolpyruvate: step 6/7. In terms of biological role, catalyzes the transfer of the enolpyruvyl moiety of phosphoenolpyruvate (PEP) to the 5-hydroxyl of shikimate-3-phosphate (S3P) to produce enolpyruvyl shikimate-3-phosphate and inorganic phosphate. This Pseudomonas sp. (strain PG2982) protein is 3-phosphoshikimate 1-carboxyvinyltransferase.